Reading from the N-terminus, the 669-residue chain is UvrABC system protein C (669 aa).

The region spanning 14-91 is the GIY-YIG domain; sequence DSPGCYLHKD…IQRYKPKYNI (78 aa). Residues 196-231 enclose the UVR domain; that stretch reads KKIVKELEGKMISASDNMEFEQAAEYRDVIKAIGTL. Residues 647–669 form a disordered region; it reads PHKSDENWESIKDNVPLLKSEKS. Residues 648-658 show a composition bias toward basic and acidic residues; sequence HKSDENWESIK.

Belongs to the UvrC family. Interacts with UvrB in an incision complex.

It is found in the cytoplasm. The UvrABC repair system catalyzes the recognition and processing of DNA lesions. UvrC both incises the 5' and 3' sides of the lesion. The N-terminal half is responsible for the 3' incision and the C-terminal half is responsible for the 5' incision. This is UvrABC system protein C from Lactococcus lactis subsp. cremoris (strain MG1363).